Here is a 29-residue protein sequence, read N- to C-terminus: Glucagon (29 aa).

This sequence belongs to the glucagon family.

The protein localises to the secreted. Glucagon plays a key role in glucose metabolism and homeostasis. Regulates blood glucose by increasing gluconeogenesis and decreasing glycolysis. This chain is Glucagon (gcg), found in Callorhinchus milii (Ghost shark).